A 511-amino-acid polypeptide reads, in one-letter code: Cytochrome P450 26B1 (511 aa).

Cys-440 is a heme binding site.

It belongs to the cytochrome P450 family. It depends on heme as a cofactor.

The protein resides in the endoplasmic reticulum membrane. It is found in the microsome membrane. The enzyme catalyses all-trans-retinoate + reduced [NADPH--hemoprotein reductase] + O2 = all-trans-4-hydroxyretinoate + oxidized [NADPH--hemoprotein reductase] + H2O + H(+). It catalyses the reaction all-trans-retinoate + reduced [NADPH--hemoprotein reductase] + O2 = all-trans-18-hydroxyretinoate + oxidized [NADPH--hemoprotein reductase] + H2O + H(+). A cytochrome P450 monooxygenase involved in the metabolism of retinoates (RAs), the active metabolites of vitamin A, and critical signaling molecules in animals. RAs exist as at least four different isomers: all-trans-RA (atRA), 9-cis-RA, 13-cis-RA, and 9,13-dicis-RA, where atRA is considered to be the biologically active isomer, although 9-cis-RA and 13-cis-RA also have activity. Catalyzes the hydroxylation of atRA primarily at C-4 and C-18, thereby contributing to the regulation of atRA homeostasis and signaling. Hydroxylation of atRA limits its biological activity and initiates a degradative process leading to its eventual elimination. Involved in the convertion of atRA to all-trans-4-oxo-RA. Can oxidize all-trans-13,14-dihydroretinoate (DRA) to metabolites which could include all-trans-4-oxo-DRA, all-trans-4-hydroxy-DRA, all-trans-5,8-epoxy-DRA, and all-trans-18-hydroxy-DRA. The protein is Cytochrome P450 26B1 (cyp26b1) of Xenopus tropicalis (Western clawed frog).